Here is a 283-residue protein sequence, read N- to C-terminus: Non-selective voltage-gated ion channel VDAC1 (283 aa).

At alanine 2 the chain carries N-acetylalanine. Lysine 12 serves as a coordination point for ATP. Residue lysine 12 forms a Glycyl lysine isopeptide (Lys-Gly) (interchain with G-Cter in ubiquitin) linkage. Serine 13 carries the phosphoserine modification. Threonine 19 bears the Phosphothreonine mark. ATP is bound at residue lysine 20. Residue lysine 20 is modified to N6-acetyllysine; alternate. An N6-succinyllysine; alternate modification is found at lysine 20. Lysine 20 is covalently cross-linked (Glycyl lysine isopeptide (Lys-Gly) (interchain with G-Cter in ubiquitin); alternate). 2 beta stranded membrane-spanning segments follow: residues 26-35 (LIKLDLKTKS) and 39-47 (LEFTSSGSA). Residues lysine 53 and lysine 61 each participate in a glycyl lysine isopeptide (Lys-Gly) (interchain with G-Cter in ubiquitin) cross-link. The chain crosses the membrane as a beta stranded span at residues 54-64 (VNGSLETKYRW). The residue at position 67 (tyrosine 67) is a Phosphotyrosine. 3 beta stranded membrane passes run 69 to 76 (LTFTEKWN), 80 to 89 (TLGTEITVED), and 95 to 104 (LKLTFDSSFS). Threonine 107 carries the phosphothreonine modification. The residue at position 109 (lysine 109) is an N6-acetyllysine; alternate. Residue lysine 109 forms a Glycyl lysine isopeptide (Lys-Gly) (interchain with G-Cter in ubiquitin); alternate linkage. Lysine 110 participates in a covalent cross-link: Glycyl lysine isopeptide (Lys-Gly) (interchain with G-Cter in ubiquitin). Transmembrane regions (beta stranded) follow at residues 111–120 (NAKIKTGYKR), 123–130 (INLGCDVD), 137–145 (SIRGALVLG), and 150–158 (LAGYQMNFE). Serine 137 is subject to Phosphoserine. A Glycyl lysine isopeptide (Lys-Gly) (interchain with G-Cter in ubiquitin) cross-link involves residue lysine 161. 6 beta stranded membrane passes run 163–175 (RVTQ…GYKT), 178–185 (FQLHTNVN), 189–198 (EFGGSIYQKV), 202–211 (LETAVNLAWT), 218–227 (RFGIAAKYQV), and 231–238 (ACFSAKVN). Phosphoserine; by NEK1 is present on serine 193. A Phosphoserine modification is found at serine 240. 242–244 (LIG) contributes to the NAD(+) binding site. A beta stranded membrane pass occupies residues 242–251 (LIGLGYTQTL). At lysine 252 the chain carries N6-acetyllysine. The beta stranded transmembrane segment at 254–263 (GIKLTLSALL) threads the bilayer. 260 to 264 (SALLD) provides a ligand contact to NAD(+). Residue lysine 266 is modified to N6-acetyllysine; alternate. Lysine 266 participates in a covalent cross-link: Glycyl lysine isopeptide (Lys-Gly) (interchain with G-Cter in ubiquitin); alternate. The beta stranded transmembrane segment at 273–282 (HKLGLGLEFQ) threads the bilayer. Lysine 274 participates in a covalent cross-link: Glycyl lysine isopeptide (Lys-Gly) (interchain with G-Cter in ubiquitin).

It belongs to the eukaryotic mitochondrial porin family. In terms of assembly, homodimer and homotrimer; in response to cyclic AMP or calcium; oligomerization is required for scramblase activity. Component of the mitochondrial permeability transition pore complex (mPTPC), at least composed of SPG7, VDAC1 and PPIF. Interacts with SPG7, NIPSNAP2 and SLC25A30. Interacts with hexokinases including HK1. The HK1-VDAC1 complex interacts with ATF2. Interacts with BCL2L1. Interacts with BAK1. Interacts with RTL10/BOP (via BH3 domain). Interacts with amyloid-beta and APP; induces VDAC1 dephosphorylation. Interacts with TMEM41B. Interacts with BCAP31. Interacts with HSPA9; this interaction couples ITPR1 to VDAC1. In terms of processing, phosphorylation at Ser-193 by NEK1 promotes the closed conformational state preventing excessive mitochondrial membrane permeability and subsequent apoptotic cell death after injury. Phosphorylation by the AKT-GSK3B axis stabilizes the protein probably by preventing ubiquitin-mediated proteasomal degradation. Post-translationally, ubiquitinated. Undergoes monoubiquitination and polyubiquitination by PRKN; monoubiquitination at Lys-274 inhibits apoptosis, whereas polyubiquitination leads to its degradation and promotes mitophagy. Deubiquitinated by USP30. In terms of tissue distribution, widely expressed. High levels in heart and kidney with lower levels in brain and ascitic tumor. Very low levels in liver.

It is found in the mitochondrion outer membrane. The protein resides in the cell membrane. Its subcellular location is the membrane raft. The catalysed reaction is Ca(2+)(in) = Ca(2+)(out). The enzyme catalyses Na(+)(in) = Na(+)(out). It carries out the reaction chloride(in) = chloride(out). It catalyses the reaction Mg(2+)(in) = Mg(2+)(out). The catalysed reaction is K(+)(in) = K(+)(out). The enzyme catalyses ATP(in) = ATP(out). It carries out the reaction L-glutamate(out) = L-glutamate(in). It catalyses the reaction dopamine(out) = dopamine(in). The catalysed reaction is acetylcholine(in) = acetylcholine(out). The enzyme catalyses Fe(III)-[cytochrome c](out) = Fe(III)-[cytochrome c](in). It carries out the reaction a 1,2-diacyl-sn-glycero-3-phosphocholine(in) = a 1,2-diacyl-sn-glycero-3-phosphocholine(out). It catalyses the reaction a 1,2-diacyl-sn-glycero-3-phospho-L-serine(in) = a 1,2-diacyl-sn-glycero-3-phospho-L-serine(out). With respect to regulation, inhibited by nitric oxide. Voltage-gated ion channel activity is inhibited by lanthanum(3+) and ruthenium red. Mitochondrial calcium transport is inhibited by lanthanum(3+), ruthenium red and Ru360. Functionally, non-selective voltage-gated ion channel that mediates the transport of anions and cations through the mitochondrion outer membrane and plasma membrane. The channel at the outer mitochondrial membrane allows diffusion of small hydrophilic molecules; in the plasma membrane it is involved in cell volume regulation and apoptosis. It adopts an open conformation at low or zero membrane potential and a closed conformation at potentials above 30-40 mV. The open state has a weak anion selectivity whereas the closed state is cation-selective. Binds various signaling molecules, including the sphingolipid ceramide, the phospholipid phosphatidylcholine, and the sterols cholesterol and oxysterol. In depolarized mitochondria, acts downstream of PRKN and PINK1 to promote mitophagy or prevent apoptosis; polyubiquitination by PRKN promotes mitophagy, while monoubiquitination by PRKN decreases mitochondrial calcium influx which ultimately inhibits apoptosis. May participate in the formation of the permeability transition pore complex (PTPC) responsible for the release of mitochondrial products that triggers apoptosis. May mediate ATP export from cells. Part of a complex composed of HSPA9, ITPR1 and VDAC1 that regulates mitochondrial calcium-dependent apoptosis by facilitating calcium transport from the ER lumen to the mitochondria intermembrane space thus providing calcium for the downstream calcium channel MCU that directly releases it into mitochondria matrix. Its function is as follows. Catalyzes the scrambling of phospholipids across the outer mitochondrial membrane; the mechanism is unrelated to channel activity and is capable of translocating both anionic and zwitterionic phospholipids. The protein is Non-selective voltage-gated ion channel VDAC1 of Rattus norvegicus (Rat).